The sequence spans 586 residues: DNA-directed RNA polymerase subunit beta' (586 aa).

4 residues coordinate Zn(2+): C64, C66, C85, and C88. Positions 448, 450, and 452 each coordinate Mg(2+).

The protein belongs to the RNA polymerase beta' chain family. RpoC1 subfamily. In terms of assembly, in plastids the minimal PEP RNA polymerase catalytic core is composed of four subunits: alpha, beta, beta', and beta''. When a (nuclear-encoded) sigma factor is associated with the core the holoenzyme is formed, which can initiate transcription. Requires Mg(2+) as cofactor. Zn(2+) is required as a cofactor.

The protein resides in the plastid. It localises to the chloroplast. It carries out the reaction RNA(n) + a ribonucleoside 5'-triphosphate = RNA(n+1) + diphosphate. DNA-dependent RNA polymerase catalyzes the transcription of DNA into RNA using the four ribonucleoside triphosphates as substrates. The chain is DNA-directed RNA polymerase subunit beta' from Euglena gracilis.